The following is a 363-amino-acid chain: MEPLSLASTPSWNASAASSGNHNWSLVGSASPMGARAVLVPVLYLLVCTVGLSGNTLVIYVVLRHAKMKTVTNVYILNLAVADVLFMLGLPFLATQNAVVSYWPFGSFLCRLVMTLDGINQFTSIFCLMVMSVDRYLAVVHPLRSARWRRPRVAKMASAAVWVFSLLMSLPLLVFADVQEGWGTCNLSWPEPVGLWGAAFITYTSVLGFFGPLLVICLCYLLIVVKVKAAGMRVGSSRRRRSEPKVTRMVVVVVLVFVGCWLPFFIVNIVNLAFTLPEEPTSAGLYFFVVVLSYANSCANPLLYGFLSDNFRQSFRKVLCLRRGYGMEDADAIEPRPDKSGRPQATLPTRSCEANGLMQTSRI.

At 1–35 (MEPLSLASTPSWNASAASSGNHNWSLVGSASPMGA) the chain is on the extracellular side. N-linked (GlcNAc...) asparagine glycosylation is found at N13 and N23. The chain crosses the membrane as a helical span at residues 36 to 63 (RAVLVPVLYLLVCTVGLSGNTLVIYVVL). Residues 64 to 73 (RHAKMKTVTN) are Cytoplasmic-facing. The helical transmembrane segment at 74-99 (VYILNLAVADVLFMLGLPFLATQNAV) threads the bilayer. Over 100–111 (VSYWPFGSFLCR) the chain is Extracellular. C110 and C185 are disulfide-bonded. The helical transmembrane segment at 112-133 (LVMTLDGINQFTSIFCLMVMSV) threads the bilayer. Topologically, residues 134 to 155 (DRYLAVVHPLRSARWRRPRVAK) are cytoplasmic. The chain crosses the membrane as a helical span at residues 156–176 (MASAAVWVFSLLMSLPLLVFA). Residues 177–196 (DVQEGWGTCNLSWPEPVGLW) lie on the Extracellular side of the membrane. N186 is a glycosylation site (N-linked (GlcNAc...) asparagine). Residues 197–221 (GAAFITYTSVLGFFGPLLVICLCYL) traverse the membrane as a helical segment. At 222 to 247 (LIVVKVKAAGMRVGSSRRRRSEPKVT) the chain is on the cytoplasmic side. The chain crosses the membrane as a helical span at residues 248–273 (RMVVVVVLVFVGCWLPFFIVNIVNLA). Residues 274–283 (FTLPEEPTSA) lie on the Extracellular side of the membrane. The chain crosses the membrane as a helical span at residues 284–308 (GLYFFVVVLSYANSCANPLLYGFLS). Residues 309 to 363 (DNFRQSFRKVLCLRRGYGMEDADAIEPRPDKSGRPQATLPTRSCEANGLMQTSRI) lie on the Cytoplasmic side of the membrane. A lipid anchor (S-palmitoyl cysteine; by ZDHHC5) is attached at C320. The interval 331 to 363 (DAIEPRPDKSGRPQATLPTRSCEANGLMQTSRI) is disordered.

It belongs to the G-protein coupled receptor 1 family. As to quaternary structure, heterodimer with SSTR2. Heterodimerization with SSTR2 increases cell growth inhibition activity of SSTR2. In terms of processing, palmitoylated at Cys-320 by ZDHHC5, but not ZDHHC8. Palmitoylation creates an additional intracellular loop which is thought to be important for efficient coupling to G-proteins and may target the protein to lipid rafts. As to expression, prominent in the pituitary and small intestine. Low levels in islets and spleen. Not detected in kidney, pancreas, cerebellum, or cortex.

It localises to the cell membrane. In terms of biological role, receptor for somatostatin-28. The activity of this receptor is mediated by G proteins which inhibit adenylyl cyclase. Increases cell growth inhibition activity of SSTR2 following heterodimerization. This chain is Somatostatin receptor type 5 (Sstr5), found in Rattus norvegicus (Rat).